The sequence spans 273 residues: SET domain-containing protein 9 (273 aa).

Residues 96–269 (FSVAQATSSL…QGEELFSNYY (174 aa)) form the SET domain. Tyr-268 contacts S-adenosyl-L-methionine.

The protein belongs to the class V-like SAM-binding methyltransferase superfamily.

This chain is SET domain-containing protein 9 (SETD9), found in Pongo abelii (Sumatran orangutan).